The primary structure comprises 821 residues: E3 ubiquitin-protein ligase RSP5 (821 aa).

Positions 1–112 constitute a C2 domain; it reads MGSNLPAQPN…QMGGDEMLTR (112 aa). Polar residues-rich tracts occupy residues 133 to 144 and 188 to 201; these read TNLSTPNPNQAN and LNPQRVPSATRPTS. Disordered stretches follow at residues 133–239 and 255–359; these read TNLS…GWER and RTTT…YFVD. The span at 202-217 shows a compositional bias: low complexity; the sequence is QIAPPNGAPPIANGQG. Residues 231–264 enclose the WW 1 domain; that stretch reads GRLPAGWERREDNLGRTYYVDHNTRTTTWNRPSA. Residues 255-272 are compositionally biased toward polar residues; the sequence is RTTTWNRPSANYNEQTQR. The segment covering 281–296 has biased composition (basic and acidic residues); sequence LERRAHQNRMLPEDRT. Positions 297 to 312 are enriched in polar residues; it reads GASSPNLSETQPQAQT. Low complexity predominate over residues 320–339; it reads ASNSNVVSMMATGATTAGTG. WW domains lie at 339 to 372 and 399 to 432; these read GELPPGWEQRTTPEGRPYFVDHNTRTTTWVDPRR and GPLPSGWEMRLTNTARVYFVDHNTKTTTWDDPRL. The 334-residue stretch at 488 to 821 folds into the HECT domain; that stretch reads SASDLKKRLM…VEETLGFGQE (334 aa). Cys789 acts as the Glycyl thioester intermediate in catalysis.

This sequence belongs to the RSP5/NEDD4 family. Interacts with apyA and creD.

Its subcellular location is the cytoplasm. It carries out the reaction S-ubiquitinyl-[E2 ubiquitin-conjugating enzyme]-L-cysteine + [acceptor protein]-L-lysine = [E2 ubiquitin-conjugating enzyme]-L-cysteine + N(6)-ubiquitinyl-[acceptor protein]-L-lysine.. It participates in protein modification; protein ubiquitination. E3 ubiquitin-protein ligase which accepts ubiquitin from an E2 ubiquitin-conjugating enzyme in the form of a thioester and then directly transfers the ubiquitin to targeted substrates. Probably involved in the regulatory network controlling carbon source utilization. Ubiquitinates 'Lys-528' of the uric acid/xanthine transporter uapA at the cell membrane, leading to its internalization, sorting into the endosomal pathway to the vacuolar lumen where it is eventually degraded. This chain is E3 ubiquitin-protein ligase RSP5 (hulA), found in Emericella nidulans (strain FGSC A4 / ATCC 38163 / CBS 112.46 / NRRL 194 / M139) (Aspergillus nidulans).